The following is a 128-amino-acid chain: Ribonuclease P protein component (128 aa).

Belongs to the RnpA family. As to quaternary structure, consists of a catalytic RNA component (M1 or rnpB) and a protein subunit.

It carries out the reaction Endonucleolytic cleavage of RNA, removing 5'-extranucleotides from tRNA precursor.. RNaseP catalyzes the removal of the 5'-leader sequence from pre-tRNA to produce the mature 5'-terminus. It can also cleave other RNA substrates such as 4.5S RNA. The protein component plays an auxiliary but essential role in vivo by binding to the 5'-leader sequence and broadening the substrate specificity of the ribozyme. The sequence is that of Ribonuclease P protein component from Prochlorococcus marinus (strain MIT 9312).